The primary structure comprises 44 residues: Photosystem I reaction center subunit IX (44 aa).

Residues tyrosine 7–isoleucine 27 form a helical membrane-spanning segment.

Belongs to the PsaJ family.

Its subcellular location is the plastid. It localises to the chloroplast thylakoid membrane. Functionally, may help in the organization of the PsaE and PsaF subunits. This is Photosystem I reaction center subunit IX from Welwitschia mirabilis (Tree tumbo).